Consider the following 287-residue polypeptide: ATP phosphoribosyltransferase (287 aa).

The protein belongs to the ATP phosphoribosyltransferase family. Long subfamily. Equilibrium between an active dimeric form, an inactive hexameric form and higher aggregates. Interconversion between the various forms is largely reversible and is influenced by the natural substrates and inhibitors of the enzyme. The cofactor is Mg(2+).

It localises to the cytoplasm. It catalyses the reaction 1-(5-phospho-beta-D-ribosyl)-ATP + diphosphate = 5-phospho-alpha-D-ribose 1-diphosphate + ATP. The protein operates within amino-acid biosynthesis; L-histidine biosynthesis; L-histidine from 5-phospho-alpha-D-ribose 1-diphosphate: step 1/9. Its activity is regulated as follows. Feedback inhibited by histidine. Catalyzes the condensation of ATP and 5-phosphoribose 1-diphosphate to form N'-(5'-phosphoribosyl)-ATP (PR-ATP). Has a crucial role in the pathway because the rate of histidine biosynthesis seems to be controlled primarily by regulation of HisG enzymatic activity. The chain is ATP phosphoribosyltransferase (hisG) from Mycobacterium leprae (strain TN).